The chain runs to 367 residues: Carbohydrate sulfotransferase 14 (367 aa).

The Cytoplasmic segment spans residues 1 to 34 (MPPRKKEYGIKRASGSLVHFRAPVSATTIRRHSA). The helical; Signal-anchor for type II membrane protein transmembrane segment at 35–55 (VVPSVLTFAVIVASGGLLLMI) threads the bilayer. The Lumenal portion of the chain corresponds to 56–367 (EKGMLNSVQT…PNTTTEYCRH (312 aa)). Asn-99 is a glycosylation site (N-linked (GlcNAc...) asparagine). 3'-phosphoadenylyl sulfate-binding positions include 144–150 (PKVACSN) and 202–210 (REPMARLLS). Asn-359 carries N-linked (GlcNAc...) asparagine glycosylation.

It belongs to the sulfotransferase 2 family.

The protein localises to the golgi apparatus membrane. Its function is as follows. Catalyzes the transfer of sulfate to position 4 of the N-acetylgalactosamine (GalNAc) residue of dermatan sulfate. This chain is Carbohydrate sulfotransferase 14 (chst14), found in Danio rerio (Zebrafish).